We begin with the raw amino-acid sequence, 527 residues long: Nucleobase-ascorbate transporter LPE1 (527 aa).

A run of 12 helical transmembrane segments spans residues 43–63, 68–88, 92–112, 132–152, 163–183, 189–209, 219–239, 284–304, 361–383, 387–409, 427–447, and 458–478; these read LVML…MGGG, AIVI…QVHF, LPAV…IILS, LQGA…FGIW, AAVP…FPGV, VGLP…HLFA, AVLV…AAGA, FAML…LIAV, VIKI…AVLA, LPIF…FSLL, LFLG…FGFG, and VMVN…AYLL.

It belongs to the nucleobase:cation symporter-2 (NCS2) (TC 2.A.40) family. Highly expressed in roots.

The protein localises to the membrane. Its activity is regulated as follows. Inhibited by excess of xanthin, uric acid and ascorbic acid, and by 100 um N,N-dicyclohexylcarbodiimide and 30 um carbonyl cyanide m-chlorophenyl-hydrazone. Its function is as follows. High affinity uric acid-xanthine transporter in A.nidulans. Binds, but cannot transport ascorbic acid. This is Nucleobase-ascorbate transporter LPE1 (LPE1) from Zea mays (Maize).